Here is a 431-residue protein sequence, read N- to C-terminus: Glutamyl-tRNA(Gln) amidotransferase subunit A (431 aa).

Residues Lys55 and Ser130 each act as charge relay system in the active site. Catalysis depends on Ser154, which acts as the Acyl-ester intermediate.

This sequence belongs to the amidase family. GatA subfamily. As to quaternary structure, heterotrimer of A, B and C subunits.

It carries out the reaction L-glutamyl-tRNA(Gln) + L-glutamine + ATP + H2O = L-glutaminyl-tRNA(Gln) + L-glutamate + ADP + phosphate + H(+). Allows the formation of correctly charged Gln-tRNA(Gln) through the transamidation of misacylated Glu-tRNA(Gln) in organisms which lack glutaminyl-tRNA synthetase. The reaction takes place in the presence of glutamine and ATP through an activated gamma-phospho-Glu-tRNA(Gln). This Methanococcus vannielii (strain ATCC 35089 / DSM 1224 / JCM 13029 / OCM 148 / SB) protein is Glutamyl-tRNA(Gln) amidotransferase subunit A.